We begin with the raw amino-acid sequence, 388 residues long: Putative 8-amino-7-oxononanoate synthase (388 aa).

Arg18 contributes to the substrate binding site. Residue 105 to 106 coordinates pyridoxal 5'-phosphate; sequence GY. His130 contacts substrate. Residues Ser176, 201–204, and 232–235 each bind pyridoxal 5'-phosphate; these read DDAH and TLSK. Lys235 carries the post-translational modification N6-(pyridoxal phosphate)lysine. Thr349 contributes to the substrate binding site.

The protein belongs to the class-II pyridoxal-phosphate-dependent aminotransferase family. BioF subfamily. As to quaternary structure, homodimer. Pyridoxal 5'-phosphate is required as a cofactor.

It carries out the reaction 6-carboxyhexanoyl-[ACP] + L-alanine + H(+) = (8S)-8-amino-7-oxononanoate + holo-[ACP] + CO2. Its pathway is cofactor biosynthesis; biotin biosynthesis. Catalyzes the decarboxylative condensation of pimeloyl-[acyl-carrier protein] and L-alanine to produce 8-amino-7-oxononanoate (AON), [acyl-carrier protein], and carbon dioxide. This is Putative 8-amino-7-oxononanoate synthase (bioF) from Acetivibrio thermocellus (strain ATCC 27405 / DSM 1237 / JCM 9322 / NBRC 103400 / NCIMB 10682 / NRRL B-4536 / VPI 7372) (Clostridium thermocellum).